We begin with the raw amino-acid sequence, 406 residues long: Tryptophan synthase beta chain (406 aa).

Lys99 is modified (N6-(pyridoxal phosphate)lysine).

This sequence belongs to the TrpB family. As to quaternary structure, tetramer of two alpha and two beta chains. Requires pyridoxal 5'-phosphate as cofactor.

The enzyme catalyses (1S,2R)-1-C-(indol-3-yl)glycerol 3-phosphate + L-serine = D-glyceraldehyde 3-phosphate + L-tryptophan + H2O. It functions in the pathway amino-acid biosynthesis; L-tryptophan biosynthesis; L-tryptophan from chorismate: step 5/5. In terms of biological role, the beta subunit is responsible for the synthesis of L-tryptophan from indole and L-serine. This is Tryptophan synthase beta chain from Sinorhizobium fredii (strain NBRC 101917 / NGR234).